A 460-amino-acid chain; its full sequence is ATP synthase subunit beta (460 aa).

149–156 contributes to the ATP binding site; sequence GGAGVGKT.

Belongs to the ATPase alpha/beta chains family. In terms of assembly, F-type ATPases have 2 components, CF(1) - the catalytic core - and CF(0) - the membrane proton channel. CF(1) has five subunits: alpha(3), beta(3), gamma(1), delta(1), epsilon(1). CF(0) has three main subunits: a(1), b(2) and c(9-12). The alpha and beta chains form an alternating ring which encloses part of the gamma chain. CF(1) is attached to CF(0) by a central stalk formed by the gamma and epsilon chains, while a peripheral stalk is formed by the delta and b chains.

It localises to the cell membrane. It carries out the reaction ATP + H2O + 4 H(+)(in) = ADP + phosphate + 5 H(+)(out). In terms of biological role, produces ATP from ADP in the presence of a proton gradient across the membrane. The catalytic sites are hosted primarily by the beta subunits. This is ATP synthase subunit beta from Acholeplasma laidlawii (strain PG-8A).